A 776-amino-acid chain; its full sequence is Protein STRUBBELIG-RECEPTOR FAMILY 3 (776 aa).

Positions 1–29 are cleaved as a signal peptide; that stretch reads MAAKRSIYCLLLLPLLLSLLIWIPSISLA. Over 30–35 the chain is Cytoplasmic; it reads ATNPDD. Residues 36–56 form a helical membrane-spanning segment; that stretch reads VAAINGLFAALGAPVLPGWIA. The Extracellular portion of the chain corresponds to 57 to 316; sequence SGGDPCGEAW…KGKNSSHTKK (260 aa). N-linked (GlcNAc...) asparagine glycosylation occurs at N72. LRR repeat units follow at residues 99-120, 121-143, 145-167, 169-191, 193-215, and 216-236; these read SIRG…TLPV, TLQH…LGTL, FLND…FQNL, GLIN…MENL, TLTT…QGLP, and LQDL…KLLS. The N-linked (GlcNAc...) asparagine glycan is linked to N179. 2 N-linked (GlcNAc...) asparagine glycosylation sites follow: N248 and N253. The interval 251–311 is disordered; the sequence is MINSTSTAPS…SSENSKGKNS (61 aa). Residues 254–268 are compositionally biased toward low complexity; sequence STSTAPSLSPSLSPT. A compositionally biased stretch (pro residues) spans 269–284; it reads KPAPTRPFSGVPPPPN. A compositionally biased stretch (low complexity) spans 298-309; sequence SEGSSSENSKGK. Residue N310 is glycosylated (N-linked (GlcNAc...) asparagine). The chain crosses the membrane as a helical span at residues 317–337; that stretch reads IILIAFAGVLVFIILVLAILL. At 338 to 776 the chain is on the cytoplasmic side; that stretch reads LLPKCARRRE…RHGSGDSTAD (439 aa). Residues 355–440 are disordered; that stretch reads PHQVGADRGS…PPPPPPPPPP (86 aa). The span at 381–407 shows a compositional bias: basic and acidic residues; sequence RSEKVQREPFKKAGEEPKVLHDLERLR. The span at 426–440 shows a compositional bias: pro residues; that stretch reads MPPPPPPPPPPPPPP. Positions 485-763 constitute a Protein kinase domain; sequence FAQENLIGSG…EVVQDLLDMI (279 aa). Residues 491 to 499 and K513 each bind ATP; that span reads IGSGMLGSV.

It belongs to the protein kinase superfamily. Ser/Thr protein kinase family. Expressed in seedlings, roots, stems, leaves, flowers and siliques.

The protein resides in the membrane. Not essential for epidermal patterning and not redundant with STRUBBELIG. The sequence is that of Protein STRUBBELIG-RECEPTOR FAMILY 3 (SRF3) from Arabidopsis thaliana (Mouse-ear cress).